The primary structure comprises 277 residues: S-formylglutathione hydrolase FrmB (277 aa).

Catalysis depends on charge relay system residues S145, D221, and H254.

This sequence belongs to the esterase D family.

It carries out the reaction S-formylglutathione + H2O = formate + glutathione + H(+). Functionally, serine hydrolase involved in the detoxification of formaldehyde. Hydrolyzes S-formylglutathione to glutathione and formate. The chain is S-formylglutathione hydrolase FrmB (frmB) from Escherichia coli O139:H28 (strain E24377A / ETEC).